Consider the following 209-residue polypeptide: Protein-L-isoaspartate O-methyltransferase (209 aa).

S55 is a catalytic residue.

This sequence belongs to the methyltransferase superfamily. L-isoaspartyl/D-aspartyl protein methyltransferase family.

It localises to the cytoplasm. The enzyme catalyses [protein]-L-isoaspartate + S-adenosyl-L-methionine = [protein]-L-isoaspartate alpha-methyl ester + S-adenosyl-L-homocysteine. Functionally, catalyzes the methyl esterification of L-isoaspartyl residues in peptides and proteins that result from spontaneous decomposition of normal L-aspartyl and L-asparaginyl residues. It plays a role in the repair and/or degradation of damaged proteins. The protein is Protein-L-isoaspartate O-methyltransferase of Anaeromyxobacter dehalogenans (strain 2CP-1 / ATCC BAA-258).